We begin with the raw amino-acid sequence, 795 residues long: Outer membrane protein assembly factor BamA (795 aa).

A signal peptide spans 1–19; sequence MKKLLIASLLFGTTTTVFA. 5 consecutive POTRA domains span residues 22–89, 90–170, 173–259, 262–341, and 344–418; these read FVAK…VVAK, SIIS…INED, AKLA…VNEG, YDLR…VDAG, and LTVR…VKER.

This sequence belongs to the BamA family. As to quaternary structure, part of the Bam complex.

Its subcellular location is the cell outer membrane. Its function is as follows. Part of the outer membrane protein assembly complex, which is involved in assembly and insertion of beta-barrel proteins into the outer membrane. The protein is Outer membrane protein assembly factor BamA of Haemophilus influenzae (strain ATCC 51907 / DSM 11121 / KW20 / Rd).